The following is a 547-amino-acid chain: Glucose-6-phosphate isomerase (547 aa).

Glu356 functions as the Proton donor in the catalytic mechanism. Active-site residues include His387 and Lys508.

It belongs to the GPI family.

It is found in the cytoplasm. The enzyme catalyses alpha-D-glucose 6-phosphate = beta-D-fructose 6-phosphate. It functions in the pathway carbohydrate biosynthesis; gluconeogenesis. The protein operates within carbohydrate degradation; glycolysis; D-glyceraldehyde 3-phosphate and glycerone phosphate from D-glucose: step 2/4. Its function is as follows. Catalyzes the reversible isomerization of glucose-6-phosphate to fructose-6-phosphate. The polypeptide is Glucose-6-phosphate isomerase (Cupriavidus taiwanensis (strain DSM 17343 / BCRC 17206 / CCUG 44338 / CIP 107171 / LMG 19424 / R1) (Ralstonia taiwanensis (strain LMG 19424))).